The primary structure comprises 276 residues: GPN-loop GTPase 3 (276 aa).

13–18 (SSGKST) provides a ligand contact to GTP. The short motif at 70–72 (GPN) is the Gly-Pro-Asn (GPN)-loop; involved in dimer interface element. 173–176 (SKMD) serves as a coordination point for GTP. Residues 257–276 (EDQEPKDPDRFEADDLEDDE) are disordered. Residues 259-269 (QEPKDPDRFEA) show a composition bias toward basic and acidic residues.

It belongs to the GPN-loop GTPase family. As to quaternary structure, heterodimers with gpn1 or gpn2. Binds to RNA polymerase II (RNAPII).

Its subcellular location is the cytoplasm. The protein localises to the nucleus. In terms of biological role, small GTPase required for proper nuclear import of RNA polymerase II and III (RNAPII and RNAPIII). May act at an RNAP assembly step prior to nuclear import. The sequence is that of GPN-loop GTPase 3 from Schizosaccharomyces pombe (strain 972 / ATCC 24843) (Fission yeast).